A 342-amino-acid chain; its full sequence is MEMMPQYDLSRLPENTALKQQTLPTQQLNLSASVVLSIFFITGGFCLSIGIILLLSAKSTKKIEINYTKTCANCAQLRENSSNFDKACNCSLPFYLPEKMEGDVYMYYKLYGFYQNLYQYILSRSNSQLVGKDIWDTTNCDPFQVSHNDTPIIPCGAIANSIFNDTITLSYNLNSSTQIEVPMLKSGLTWWTDKYVKFRNPRSSNFTSTFAGSSKPLHWAKPIYELDLDDPGNNGFLNEDFIVWMRTAAFPTFKKLYRRLKRVHAFAEGLPAGNYSLSISYNFPVTMFQGEKSIVLSTLTWIGGGGLFLGLTYTVTGALTLLASFAILTIHLMLKRSKLNFL.

Residues 1 to 33 (MEMMPQYDLSRLPENTALKQQTLPTQQLNLSAS) are Cytoplasmic-facing. The chain crosses the membrane as a helical span at residues 34–54 (VVLSIFFITGGFCLSIGIILL). The Extracellular portion of the chain corresponds to 55–306 (LSAKSTKKIE…STLTWIGGGG (252 aa)). N-linked (GlcNAc...) asparagine glycosylation is found at Asn66, Asn80, Asn89, and Asn205. A helical membrane pass occupies residues 307–327 (LFLGLTYTVTGALTLLASFAI). Residues 328–342 (LTIHLMLKRSKLNFL) lie on the Cytoplasmic side of the membrane.

The protein belongs to the CDC50/LEM3 family. As to expression, specifically expressed in testis.

It localises to the membrane. The chain is Cell cycle control protein 50C (Tmem30c) from Mus musculus (Mouse).